Here is a 445-residue protein sequence, read N- to C-terminus: Phenylacetate-coenzyme A ligase (445 aa).

This sequence belongs to the phenylacetyl-CoA ligase family. In terms of assembly, monomer.

The catalysed reaction is 2-phenylacetate + ATP + CoA = phenylacetyl-CoA + AMP + diphosphate. It participates in aromatic compound metabolism; phenylacetate degradation. Functionally, catalyzes the activation of phenylacetic acid (PA) to phenylacetyl-CoA (PA-CoA). Involved in the phenylalanine metabolism. This chain is Phenylacetate-coenzyme A ligase, found in Thermus thermophilus (strain ATCC BAA-163 / DSM 7039 / HB27).